The chain runs to 689 residues: Glycine--tRNA ligase beta subunit (689 aa).

This sequence belongs to the class-II aminoacyl-tRNA synthetase family. In terms of assembly, tetramer of two alpha and two beta subunits.

It is found in the cytoplasm. The enzyme catalyses tRNA(Gly) + glycine + ATP = glycyl-tRNA(Gly) + AMP + diphosphate. This Coxiella burnetii (strain RSA 331 / Henzerling II) protein is Glycine--tRNA ligase beta subunit.